Here is a 307-residue protein sequence, read N- to C-terminus: GMP synthase [glutamine-hydrolyzing] subunit B (307 aa).

Residues 1-184 (MWENFIEEKV…LGLPEKIYNR (184 aa)) form the GMPS ATP-PPase domain. 27 to 33 (SGGVDSS) contributes to the ATP binding site.

As to quaternary structure, heterodimer composed of a glutamine amidotransferase subunit (A) and a GMP-binding subunit (B).

The enzyme catalyses XMP + L-glutamine + ATP + H2O = GMP + L-glutamate + AMP + diphosphate + 2 H(+). It participates in purine metabolism; GMP biosynthesis; GMP from XMP (L-Gln route): step 1/1. Catalyzes the synthesis of GMP from XMP. The polypeptide is GMP synthase [glutamine-hydrolyzing] subunit B (Thermococcus kodakarensis (strain ATCC BAA-918 / JCM 12380 / KOD1) (Pyrococcus kodakaraensis (strain KOD1))).